The chain runs to 218 residues: Serine/threonine-protein phosphatase 1 (218 aa).

Mn(2+) is bound by residues aspartate 24, histidine 26, aspartate 53, and asparagine 79. Residue histidine 80 is the Proton donor of the active site. Histidine 187 contacts Mn(2+).

Belongs to the PPP phosphatase family. PP-1 subfamily. The cofactor is Mn(2+).

It carries out the reaction O-phospho-L-seryl-[protein] + H2O = L-seryl-[protein] + phosphate. The enzyme catalyses O-phospho-L-threonyl-[protein] + H2O = L-threonyl-[protein] + phosphate. Functionally, plays a key role in signaling protein misfolding via the CpxR/CPXA transducing system. It also modulates the phosphorylated status of many phosphoproteins in E.coli, some of which acting as major chaperones. Has been shown, in vitro, to act on Ser, Thr and Tyr-phosphorylated substrates. This chain is Serine/threonine-protein phosphatase 1 (pphA), found in Escherichia coli (strain K12).